Here is a 437-residue protein sequence, read N- to C-terminus: GTPase Era, mitochondrial (437 aa).

The N-terminal 43 residues, 1-43, are a transit peptide targeting the mitochondrion; the sequence is MAAPSWRGARLVQSVLRVWQVGPHVARERVIPFSSLLGFQRRC. Residues 112-330 enclose the Era-type G domain; it reads RVLRVVLLGA…QYLLTQAQPG (219 aa). The interval 120 to 127 is G1; it reads GAPNAGKS. 120–127 is a GTP binding site; sequence GAPNAGKS. The segment at 146–150 is G2; it reads HTTRC. The G3 stretch occupies residues 167 to 170; that stretch reads DTPG. Residue 167–171 participates in GTP binding; it reads DTPGI. Ser-173 bears the Phosphoserine mark. 236 to 239 serves as a coordination point for GTP; that stretch reads NKVD. Residues 236–239 are G4; that stretch reads NKVD. Residues 271 to 290 are disordered; it reads HSHPGTHCPSPAVKDPNTQS. The tract at residues 308-310 is G5; it reads LSA. Residues 360-437 enclose the KH type-2 domain; it reads LPQEVPYNVQ…DIRLSVKLLK (78 aa).

The protein belongs to the TRAFAC class TrmE-Era-EngA-EngB-Septin-like GTPase superfamily. Era GTPase family.

Its subcellular location is the mitochondrion matrix. It localises to the mitochondrion inner membrane. Functionally, probable GTPase that plays a role in the mitochondrial ribosomal small subunit assembly. Specifically binds the 12S mitochondrial rRNA (12S mt-rRNA) to a 33 nucleotide section delineating the 3' terminal stem-loop region. May act as a chaperone that protects the 12S mt-rRNA on the 28S mitoribosomal subunit during ribosomal small subunit assembly. The chain is GTPase Era, mitochondrial (ERAL1) from Homo sapiens (Human).